The chain runs to 118 residues: UPF0344 protein YisL (118 aa).

4 helical membrane-spanning segments follow: residues 4 to 24 (LHITTWVVALILLFVSYSLYS), 33 to 53 (ITHMILRLFYILIILTGAELF), 62 to 82 (EYAGKMILGIITIGLMEMLLI), and 93 to 113 (LWVGFVIVLLLTVLLGLHLPI).

The protein belongs to the UPF0344 family.

It localises to the cell membrane. This Bacillus subtilis (strain 168) protein is UPF0344 protein YisL (yisL).